We begin with the raw amino-acid sequence, 366 residues long: Ribosomal RNA large subunit methyltransferase M (366 aa).

Residues serine 188, 221–224 (CPGG), aspartate 240, aspartate 260, and aspartate 277 each bind S-adenosyl-L-methionine. Catalysis depends on lysine 306, which acts as the Proton acceptor.

Belongs to the class I-like SAM-binding methyltransferase superfamily. RNA methyltransferase RlmE family. RlmM subfamily. Monomer.

It is found in the cytoplasm. The catalysed reaction is cytidine(2498) in 23S rRNA + S-adenosyl-L-methionine = 2'-O-methylcytidine(2498) in 23S rRNA + S-adenosyl-L-homocysteine + H(+). Catalyzes the 2'-O-methylation at nucleotide C2498 in 23S rRNA. The protein is Ribosomal RNA large subunit methyltransferase M of Escherichia coli O45:K1 (strain S88 / ExPEC).